The primary structure comprises 142 residues: Cell division protein SepF (142 aa).

The span at 21-31 shows a compositional bias: acidic residues; it reads ETTTVEEEREE. The interval 21 to 46 is disordered; it reads ETTTVEEEREEQESSHKRQPAISRTN.

Belongs to the SepF family. As to quaternary structure, homodimer. Interacts with FtsZ.

The protein resides in the cytoplasm. Functionally, cell division protein that is part of the divisome complex and is recruited early to the Z-ring. Probably stimulates Z-ring formation, perhaps through the cross-linking of FtsZ protofilaments. Its function overlaps with FtsA. The chain is Cell division protein SepF from Brevibacillus brevis (strain 47 / JCM 6285 / NBRC 100599).